Here is a 153-residue protein sequence, read N- to C-terminus: 6,7-dimethyl-8-ribityllumazine synthase (153 aa).

Residues Trp22, 56–58 (SYE), and 80–82 (AVI) each bind 5-amino-6-(D-ribitylamino)uracil. 85–86 (AT) is a (2S)-2-hydroxy-3-oxobutyl phosphate binding site. His88 (proton donor) is an active-site residue. Residue Leu113 coordinates 5-amino-6-(D-ribitylamino)uracil. Arg127 serves as a coordination point for (2S)-2-hydroxy-3-oxobutyl phosphate.

Belongs to the DMRL synthase family.

The enzyme catalyses (2S)-2-hydroxy-3-oxobutyl phosphate + 5-amino-6-(D-ribitylamino)uracil = 6,7-dimethyl-8-(1-D-ribityl)lumazine + phosphate + 2 H2O + H(+). It functions in the pathway cofactor biosynthesis; riboflavin biosynthesis; riboflavin from 2-hydroxy-3-oxobutyl phosphate and 5-amino-6-(D-ribitylamino)uracil: step 1/2. Functionally, catalyzes the formation of 6,7-dimethyl-8-ribityllumazine by condensation of 5-amino-6-(D-ribitylamino)uracil with 3,4-dihydroxy-2-butanone 4-phosphate. This is the penultimate step in the biosynthesis of riboflavin. The sequence is that of 6,7-dimethyl-8-ribityllumazine synthase from Herpetosiphon aurantiacus (strain ATCC 23779 / DSM 785 / 114-95).